A 67-amino-acid polypeptide reads, in one-letter code: DNA-directed RNA polymerase subunit omega (67 aa).

It belongs to the RNA polymerase subunit omega family. The RNAP catalytic core consists of 2 alpha, 1 beta, 1 beta' and 1 omega subunit. When a sigma factor is associated with the core the holoenzyme is formed, which can initiate transcription.

It carries out the reaction RNA(n) + a ribonucleoside 5'-triphosphate = RNA(n+1) + diphosphate. Functionally, promotes RNA polymerase assembly. Latches the N- and C-terminal regions of the beta' subunit thereby facilitating its interaction with the beta and alpha subunits. This chain is DNA-directed RNA polymerase subunit omega, found in Methylibium petroleiphilum (strain ATCC BAA-1232 / LMG 22953 / PM1).